Reading from the N-terminus, the 187-residue chain is Ribosome maturation factor RimM (187 aa).

One can recognise a PRC barrel domain in the interval 96-169 (EDEFFYADLE…KLVIDPTAAG (74 aa)).

Belongs to the RimM family. As to quaternary structure, binds ribosomal protein uS19.

The protein localises to the cytoplasm. An accessory protein needed during the final step in the assembly of 30S ribosomal subunit, possibly for assembly of the head region. Essential for efficient processing of 16S rRNA. May be needed both before and after RbfA during the maturation of 16S rRNA. It has affinity for free ribosomal 30S subunits but not for 70S ribosomes. The chain is Ribosome maturation factor RimM from Sinorhizobium medicae (strain WSM419) (Ensifer medicae).